The sequence spans 231 residues: Ribose-5-phosphate isomerase A (231 aa).

Substrate is bound by residues 28-31 (TGST), 83-86 (DGAD), and 96-99 (KGGG). Glutamate 105 functions as the Proton acceptor in the catalytic mechanism. Residue lysine 123 coordinates substrate.

The protein belongs to the ribose 5-phosphate isomerase family. As to quaternary structure, homodimer.

It carries out the reaction aldehydo-D-ribose 5-phosphate = D-ribulose 5-phosphate. It participates in carbohydrate degradation; pentose phosphate pathway; D-ribose 5-phosphate from D-ribulose 5-phosphate (non-oxidative stage): step 1/1. Catalyzes the reversible conversion of ribose-5-phosphate to ribulose 5-phosphate. This Rhizobium meliloti (strain 1021) (Ensifer meliloti) protein is Ribose-5-phosphate isomerase A.